We begin with the raw amino-acid sequence, 273 residues long: 2,3,4,5-tetrahydropyridine-2,6-dicarboxylate N-succinyltransferase (273 aa).

Arg104 and Asp141 together coordinate substrate.

The protein belongs to the transferase hexapeptide repeat family. In terms of assembly, homotrimer.

It is found in the cytoplasm. It carries out the reaction (S)-2,3,4,5-tetrahydrodipicolinate + succinyl-CoA + H2O = (S)-2-succinylamino-6-oxoheptanedioate + CoA. It participates in amino-acid biosynthesis; L-lysine biosynthesis via DAP pathway; LL-2,6-diaminopimelate from (S)-tetrahydrodipicolinate (succinylase route): step 1/3. This Neisseria meningitidis serogroup C (strain 053442) protein is 2,3,4,5-tetrahydropyridine-2,6-dicarboxylate N-succinyltransferase.